Here is a 180-residue protein sequence, read N- to C-terminus: ATP-dependent protease subunit HslV (180 aa).

Thr-7 is a catalytic residue. Positions 163, 166, and 169 each coordinate Na(+).

Belongs to the peptidase T1B family. HslV subfamily. A double ring-shaped homohexamer of HslV is capped on each side by a ring-shaped HslU homohexamer. The assembly of the HslU/HslV complex is dependent on binding of ATP.

The protein localises to the cytoplasm. The catalysed reaction is ATP-dependent cleavage of peptide bonds with broad specificity.. Its activity is regulated as follows. Allosterically activated by HslU binding. Its function is as follows. Protease subunit of a proteasome-like degradation complex believed to be a general protein degrading machinery. In Cytophaga hutchinsonii (strain ATCC 33406 / DSM 1761 / CIP 103989 / NBRC 15051 / NCIMB 9469 / D465), this protein is ATP-dependent protease subunit HslV.